The chain runs to 438 residues: UDP-N-acetylmuramoylalanine--D-glutamate ligase (438 aa).

Position 112-118 (112-118) interacts with ATP; that stretch reads GSNGKST.

Belongs to the MurCDEF family.

It is found in the cytoplasm. It carries out the reaction UDP-N-acetyl-alpha-D-muramoyl-L-alanine + D-glutamate + ATP = UDP-N-acetyl-alpha-D-muramoyl-L-alanyl-D-glutamate + ADP + phosphate + H(+). It participates in cell wall biogenesis; peptidoglycan biosynthesis. Functionally, cell wall formation. Catalyzes the addition of glutamate to the nucleotide precursor UDP-N-acetylmuramoyl-L-alanine (UMA). This Salmonella typhimurium (strain LT2 / SGSC1412 / ATCC 700720) protein is UDP-N-acetylmuramoylalanine--D-glutamate ligase.